A 327-amino-acid polypeptide reads, in one-letter code: Pyruvate dehydrogenase E1 component subunit beta (327 aa).

Glu60 lines the thiamine diphosphate pocket.

In terms of assembly, heterodimer of an alpha and a beta chain. Thiamine diphosphate serves as cofactor.

The enzyme catalyses N(6)-[(R)-lipoyl]-L-lysyl-[protein] + pyruvate + H(+) = N(6)-[(R)-S(8)-acetyldihydrolipoyl]-L-lysyl-[protein] + CO2. Its function is as follows. The pyruvate dehydrogenase complex catalyzes the overall conversion of pyruvate to acetyl-CoA and CO(2). It contains multiple copies of three enzymatic components: pyruvate dehydrogenase (E1), dihydrolipoamide acetyltransferase (E2) and lipoamide dehydrogenase (E3). This chain is Pyruvate dehydrogenase E1 component subunit beta (pdhB), found in Acholeplasma laidlawii.